A 283-amino-acid polypeptide reads, in one-letter code: Dihydropteroate synthase (283 aa).

The 257-residue stretch at 18-274 (PKIMGIVNLT…DVKATADALK (257 aa)) folds into the Pterin-binding domain. Position 25 (asparagine 25) interacts with Mg(2+). Residues threonine 66, aspartate 99, asparagine 119, aspartate 190, lysine 227, and 262 to 264 (RVH) each bind (7,8-dihydropterin-6-yl)methyl diphosphate.

The protein belongs to the DHPS family. In terms of assembly, homodimer. Requires Mg(2+) as cofactor.

The enzyme catalyses (7,8-dihydropterin-6-yl)methyl diphosphate + 4-aminobenzoate = 7,8-dihydropteroate + diphosphate. The protein operates within cofactor biosynthesis; tetrahydrofolate biosynthesis; 7,8-dihydrofolate from 2-amino-4-hydroxy-6-hydroxymethyl-7,8-dihydropteridine diphosphate and 4-aminobenzoate: step 1/2. Catalyzes the condensation of para-aminobenzoate (pABA) with 6-hydroxymethyl-7,8-dihydropterin diphosphate (DHPt-PP) to form 7,8-dihydropteroate (H2Pte), the immediate precursor of folate derivatives. This chain is Dihydropteroate synthase (folP), found in Neisseria meningitidis serogroup C.